A 174-amino-acid chain; its full sequence is Small ribosomal subunit protein uS5 (174 aa).

The S5 DRBM domain maps to Leu-19 to Val-82.

The protein belongs to the universal ribosomal protein uS5 family. In terms of assembly, part of the 30S ribosomal subunit. Contacts proteins S4 and S8.

In terms of biological role, with S4 and S12 plays an important role in translational accuracy. Located at the back of the 30S subunit body where it stabilizes the conformation of the head with respect to the body. The polypeptide is Small ribosomal subunit protein uS5 (Azoarcus sp. (strain BH72)).